The sequence spans 344 residues: Lipase chaperone (344 aa).

The helical transmembrane segment at 14–34 (AAIYGVVGLAAIAGVAMWSGA) threads the bilayer.

This sequence belongs to the lipase chaperone family.

It localises to the cell inner membrane. In terms of biological role, may be involved in the folding of the extracellular lipase during its passage through the periplasm. This chain is Lipase chaperone, found in Burkholderia cenocepacia (strain HI2424).